Here is a 308-residue protein sequence, read N- to C-terminus: Ribonuclease HIII (308 aa).

The RNase H type-2 domain occupies 88–304 (FHCIGSDEAG…RDKAIHLINQ (217 aa)). The a divalent metal cation site is built by aspartate 94, glutamate 95, and aspartate 199.

This sequence belongs to the RNase HII family. RnhC subfamily. Mn(2+) serves as cofactor. Requires Mg(2+) as cofactor.

Its subcellular location is the cytoplasm. It catalyses the reaction Endonucleolytic cleavage to 5'-phosphomonoester.. Functionally, endonuclease that specifically degrades the RNA of RNA-DNA hybrids. The polypeptide is Ribonuclease HIII (Staphylococcus epidermidis (strain ATCC 35984 / DSM 28319 / BCRC 17069 / CCUG 31568 / BM 3577 / RP62A)).